The chain runs to 143 residues: Beta/delta-urticatoxin-Uf2b (143 aa).

Positions 1-18 (MGAIVLVALMALVASSSA) are cleaved as a signal peptide. A propeptide spanning residues 19 to 80 (FSDIEHNIMK…MMLSGRPQPN (62 aa)) is cleaved from the precursor. 6 cysteine pairs are disulfide-bonded: C83–C100, C90–C105, C99–C113, C115–C129, C122–C134, and C128–C142.

The protein belongs to the urticatoxin-2 family. Expressed in trichomes, that are stiff epidermal hairs located on the surface of petioles and leaves.

The protein localises to the secreted. Plant defense neurotoxin that causes pain and systemic symptoms in mammals via modulation of voltage-gated sodium channels (Nav). Potent modulator of human Nav1.5/SCN5A (EC(50)=55 nM), Nav1.6/SCN8A (EC(50)=0.86 nM), and Nav1.7/SCN9A (EC(50)=208 nM), where it shifts the activation threshold to more negative potentials and delays fast inactivation. Also shifts the voltage-dependence of steady-state fast inactivation of Nav1.6/SCN8A, but not that of Nav1.5/SCN5A or Nav1.7/SCN9A. On Nav1.7/SCN9A, principally acts by binding to extracellular loops of domain IV (Nav site 3). In vivo, intraplantar injection into mice causes numerous dose-dependent, immediate, and long-lasting spontaneous pain behaviors, while no swelling is observed in the injected paw. At the highest doses tested, systemic symptoms including hypokinesia and hypersalivation are observed. The chain is Beta/delta-urticatoxin-Uf2b from Urtica ferox (Tree nettle).